A 233-amino-acid chain; its full sequence is 5'-methylthioadenosine/S-adenosylhomocysteine nucleosidase (233 aa).

E12 (proton acceptor) is an active-site residue. Residues G78, I152, and 173-174 each bind substrate; that span reads ME. D197 (proton donor) is an active-site residue.

It belongs to the PNP/UDP phosphorylase family. MtnN subfamily. As to quaternary structure, homodimer.

The catalysed reaction is S-adenosyl-L-homocysteine + H2O = S-(5-deoxy-D-ribos-5-yl)-L-homocysteine + adenine. The enzyme catalyses S-methyl-5'-thioadenosine + H2O = 5-(methylsulfanyl)-D-ribose + adenine. It catalyses the reaction 5'-deoxyadenosine + H2O = 5-deoxy-D-ribose + adenine. It participates in amino-acid biosynthesis; L-methionine biosynthesis via salvage pathway; S-methyl-5-thio-alpha-D-ribose 1-phosphate from S-methyl-5'-thioadenosine (hydrolase route): step 1/2. Its function is as follows. Catalyzes the irreversible cleavage of the glycosidic bond in both 5'-methylthioadenosine (MTA) and S-adenosylhomocysteine (SAH/AdoHcy) to adenine and the corresponding thioribose, 5'-methylthioribose and S-ribosylhomocysteine, respectively. Also cleaves 5'-deoxyadenosine, a toxic by-product of radical S-adenosylmethionine (SAM) enzymes, into 5-deoxyribose and adenine. Thus, is required for in vivo function of the radical SAM enzymes biotin synthase and lipoic acid synthase, that are inhibited by 5'-deoxyadenosine accumulation. This chain is 5'-methylthioadenosine/S-adenosylhomocysteine nucleosidase, found in Yersinia pestis bv. Antiqua (strain Angola).